Reading from the N-terminus, the 189-residue chain is Large ribosomal subunit protein uL5 (189 aa).

Belongs to the universal ribosomal protein uL5 family. Part of the 50S ribosomal subunit; part of the 5S rRNA/L5/L18/L25 subcomplex. Contacts the 5S rRNA and the P site tRNA. Forms a bridge to the 30S subunit in the 70S ribosome.

Its function is as follows. This is one of the proteins that bind and probably mediate the attachment of the 5S RNA into the large ribosomal subunit, where it forms part of the central protuberance. In the 70S ribosome it contacts protein S13 of the 30S subunit (bridge B1b), connecting the 2 subunits; this bridge is implicated in subunit movement. Contacts the P site tRNA; the 5S rRNA and some of its associated proteins might help stabilize positioning of ribosome-bound tRNAs. This chain is Large ribosomal subunit protein uL5, found in Kocuria rhizophila (strain ATCC 9341 / DSM 348 / NBRC 103217 / DC2201).